The primary structure comprises 342 residues: S-adenosylmethionine:tRNA ribosyltransferase-isomerase (342 aa).

It belongs to the QueA family. In terms of assembly, monomer.

Its subcellular location is the cytoplasm. The catalysed reaction is 7-aminomethyl-7-carbaguanosine(34) in tRNA + S-adenosyl-L-methionine = epoxyqueuosine(34) in tRNA + adenine + L-methionine + 2 H(+). It participates in tRNA modification; tRNA-queuosine biosynthesis. Its function is as follows. Transfers and isomerizes the ribose moiety from AdoMet to the 7-aminomethyl group of 7-deazaguanine (preQ1-tRNA) to give epoxyqueuosine (oQ-tRNA). The polypeptide is S-adenosylmethionine:tRNA ribosyltransferase-isomerase (Listeria monocytogenes serotype 4b (strain CLIP80459)).